A 198-amino-acid polypeptide reads, in one-letter code: Twist-related protein 1 (198 aa).

A compositionally biased stretch (low complexity) spans 1–18; the sequence is MMQDVSSSPVSPADDSLS. The segment at 1-101 is disordered; that stretch reads MMQDVSSSPV…GGGSPQSYEE (101 aa). Basic residues predominate over residues 34-43; that stretch reads RGGRKRRSSR. 2 stretches are compositionally biased toward gly residues: residues 46–64 and 79–95; these read AGGGAGPGGAAGGVGGGDE and GCGGGAGGGGSSSGGGS. The bHLH domain maps to 104–155; the sequence is TQRVMANVRERQRTQSLNEAFAALRKIIPTLPSDKLSKIQTLKLAARYIDFL. Residues 157-187 are sufficient for transactivation activity; sequence QVLQSDELDSKMASCSYVAHERLSYAFSVWR.

In terms of assembly, efficient DNA binding requires dimerization with another bHLH protein. Homodimer or heterodimer with E proteins such as TCF3. ID1 binds preferentially to TCF3 but does not interact efficiently with TWIST1 so ID1 levels control the amount of TCF3 available to dimerize with TWIST and thus determine the type of dimer formed.

It is found in the nucleus. Acts as a transcriptional regulator. Inhibits myogenesis by sequestrating E proteins, inhibiting trans-activation by MEF2, and inhibiting DNA-binding by MYOD1 through physical interaction. This interaction probably involves the basic domains of both proteins. Also represses expression of pro-inflammatory cytokines such as TNFA and IL1B. Regulates cranial suture patterning and fusion. Activates transcription as a heterodimer with E proteins. Regulates gene expression differentially, depending on dimer composition. Homodimers induce expression of FGFR2 and POSTN while heterodimers repress FGFR2 and POSTN expression and induce THBS1 expression. Heterodimerization is also required for osteoblast differentiation. Represses the activity of the circadian transcriptional activator: NPAS2-BMAL1 heterodimer. In Eulemur fulvus fulvus (Brown lemur), this protein is Twist-related protein 1 (TWIST1).